The primary structure comprises 704 residues: DNA-directed DNA polymerase (704 aa).

The tract at residues 1 to 187 (MIVSDIEANA…TKALLEKLLS (187 aa)) is 3'-5'exonuclease. Positions 5, 7, and 174 each coordinate Mg(2+). Residues 202-704 (GYTTFWSESL…KMGPNWAICH (503 aa)) form a polymerase region. The binding to host TrxA stretch occupies residues 262 to 338 (GSWYQPKGGT…VEHVVFNPSS (77 aa)). Residues D475 and A476 each contribute to the Mg(2+) site. The substrate site is built by H506, R518, K522, and Y526. D654 contacts Mg(2+).

Belongs to the DNA polymerase type-A family. Composed of two subunits. One is encoded by the phage and the other is encoded by the host thioredoxin. Interacts with DNA primase/helicase; this interaction is essential for the coordination of DNA unwinding and nucleotide polymerization on duplex DNA. Interacts with the ssDNA-binding protein. Part of the replicase complex that includes the DNA polymerase, thioredoxin, the primase/helicase and the single-stranded DNA binding protein. Mg(2+) serves as cofactor.

It carries out the reaction DNA(n) + a 2'-deoxyribonucleoside 5'-triphosphate = DNA(n+1) + diphosphate. Its function is as follows. Replicates viral genomic DNA. This polymerase possesses two enzymatic activities: DNA synthesis (polymerase) and an exonucleolytic activity that degrades single-stranded DNA in the 3'-5' direction. Non-processive DNA polymerase that achieves processivity by binding to host thioredoxin (TrxA). This interaction increases the rate of dNTP incorporation to yield a processivity of approximately 800 nucleotides (nt) per binding event. Interacts with DNA helicase gp4 to coordinate nucleotide polymerization with unwinding of the DNA. The leading strand is synthesized continuously while synthesis of the lagging strand requires the synthesis of oligoribonucleotides by the primase domain of gp4. This Escherichia phage T7 (Bacteriophage T7) protein is DNA-directed DNA polymerase.